Here is an 81-residue protein sequence, read N- to C-terminus: NAD(P)H-quinone oxidoreductase subunit O (81 aa).

The protein belongs to the complex I NdhO subunit family. As to quaternary structure, NDH-1 can be composed of about 15 different subunits; different subcomplexes with different compositions have been identified which probably have different functions.

It is found in the cellular thylakoid membrane. It carries out the reaction a plastoquinone + NADH + (n+1) H(+)(in) = a plastoquinol + NAD(+) + n H(+)(out). It catalyses the reaction a plastoquinone + NADPH + (n+1) H(+)(in) = a plastoquinol + NADP(+) + n H(+)(out). Its function is as follows. NDH-1 shuttles electrons from an unknown electron donor, via FMN and iron-sulfur (Fe-S) centers, to quinones in the respiratory and/or the photosynthetic chain. The immediate electron acceptor for the enzyme in this species is believed to be plastoquinone. Couples the redox reaction to proton translocation, and thus conserves the redox energy in a proton gradient. Cyanobacterial NDH-1 also plays a role in inorganic carbon-concentration. The protein is NAD(P)H-quinone oxidoreductase subunit O of Prochlorococcus marinus (strain MIT 9303).